A 372-amino-acid chain; its full sequence is Bifunctional enzyme IspD/IspF (372 aa).

The segment at 1-210 is 2-C-methyl-D-erythritol 4-phosphate cytidylyltransferase; it reads MLDLSLIMLG…LNLNSPSNDI (210 aa). A 2-C-methyl-D-erythritol 2,4-cyclodiphosphate synthase region spans residues 211–372; sequence FCGNGFDVHA…LKYFNWRNVL (162 aa). Positions 217 and 219 each coordinate a divalent metal cation. 4-CDP-2-C-methyl-D-erythritol 2-phosphate-binding positions include 217 to 219 and 243 to 244; these read DVH and HS. Histidine 251 lines the a divalent metal cation pocket. 4-CDP-2-C-methyl-D-erythritol 2-phosphate is bound by residues 265–267, 270–274, 341–344, phenylalanine 348, and arginine 351; these read DIG, YPDND, and TTTE.

It in the N-terminal section; belongs to the IspD/TarI cytidylyltransferase family. IspD subfamily. The protein in the C-terminal section; belongs to the IspF family. It depends on a divalent metal cation as a cofactor.

The catalysed reaction is 2-C-methyl-D-erythritol 4-phosphate + CTP + H(+) = 4-CDP-2-C-methyl-D-erythritol + diphosphate. It catalyses the reaction 4-CDP-2-C-methyl-D-erythritol 2-phosphate = 2-C-methyl-D-erythritol 2,4-cyclic diphosphate + CMP. It functions in the pathway isoprenoid biosynthesis; isopentenyl diphosphate biosynthesis via DXP pathway; isopentenyl diphosphate from 1-deoxy-D-xylulose 5-phosphate: step 2/6. Its pathway is isoprenoid biosynthesis; isopentenyl diphosphate biosynthesis via DXP pathway; isopentenyl diphosphate from 1-deoxy-D-xylulose 5-phosphate: step 4/6. Bifunctional enzyme that catalyzes the formation of 4-diphosphocytidyl-2-C-methyl-D-erythritol from CTP and 2-C-methyl-D-erythritol 4-phosphate (MEP) (IspD), and catalyzes the conversion of 4-diphosphocytidyl-2-C-methyl-D-erythritol 2-phosphate (CDP-ME2P) to 2-C-methyl-D-erythritol 2,4-cyclodiphosphate (ME-CPP) with a corresponding release of cytidine 5-monophosphate (CMP) (IspF). The sequence is that of Bifunctional enzyme IspD/IspF from Campylobacter fetus subsp. fetus (strain 82-40).